The following is a 270-amino-acid chain: tRNA pseudouridine synthase A (270 aa).

Residue aspartate 55 is the Nucleophile of the active site. Tyrosine 110 contacts substrate.

This sequence belongs to the tRNA pseudouridine synthase TruA family.

The enzyme catalyses uridine(38/39/40) in tRNA = pseudouridine(38/39/40) in tRNA. Formation of pseudouridine at positions 38, 39 and 40 in the anticodon stem and loop of transfer RNAs. This Methanoculleus marisnigri (strain ATCC 35101 / DSM 1498 / JR1) protein is tRNA pseudouridine synthase A.